Reading from the N-terminus, the 409-residue chain is Inactive serine protease 35 (409 aa).

The N-terminal stretch at 1–20 is a signal peptide; it reads MENTLLWLVILIPGWALSDG. Asn-90 is a glycosylation site (N-linked (GlcNAc...) asparagine). The 281-residue stretch at 124–404 folds into the Peptidase S1 domain; that stretch reads VYGTDSRFSI…ICLWIHGNAA (281 aa). A disulfide bond links Cys-154 and Cys-170. Over residues 188–207 the composition is skewed to basic residues; the sequence is VLKMRNKGGRKKRRGSKRSR. A disordered region spans residues 188–247; that stretch reads VLKMRNKGGRKKRRGSKRSRREAESAGQSQAHLRESTTQRPGKKSRRGPRVTQGRPSFQW.

It belongs to the peptidase S1 family. As to expression, in ovary, it localizes to the theca cells of pre-antral follicles, the theca and granulosa cells of pre-ovulatory and ovulatory follicles, as well as to the developing corpus luteum.

Its subcellular location is the secreted. This is Inactive serine protease 35 (Prss35) from Mus musculus (Mouse).